The sequence spans 402 residues: MSDRHLYGSDHSYLSSKPSCSSCRRQSSTSQKNECMTNPGSIVLTQRWTVCNFESLLKLSRPGSCLRSTVFKDDAVPDACWQLCLYPGGKREENANNVSLFLKMSATSPSKEVVLKAEYRFYFLDDNDEPKFSNVNVGEFHAKPPKGGHSWGLRNIPTQKVQNSIRQDKSLVISCHIELIPDASKVPCKRVPITPSIEMPFAQIPRAHVESELEMLASGDGTDMTIVAGPLDGEREQFRVHAYKLRAHSDVFQMMLSHTEMRENQEKRIEILDFSPTSVRAMVEFIYAGVIKSDIDVYQAVDVMQIAEKYQILALKMTCEQHLLDRLNVNNVLECITHAERYNTDVLYDACVDFAIHNRQHVMALTSWRNFISDEPVLASNLLEKMVKSNDNSSPPVKKPRV.

Residues 1–25 (MSDRHLYGSDHSYLSSKPSCSSCRR) form a disordered region. A compositionally biased stretch (low complexity) spans 15–25 (SSKPSCSSCRR). The region spanning 43 to 177 (VLTQRWTVCN…DKSLVISCHI (135 aa)) is the MATH domain. Positions 222-295 (TDMTIVAGPL…IYAGVIKSDI (74 aa)) constitute a BTB domain.

Interacts with cul-3.

It participates in protein modification; protein ubiquitination. Probable substrate-specific adapter of an E3 ubiquitin-protein ligase complex which mediates the ubiquitination and subsequent proteasomal degradation of target proteins. This Caenorhabditis elegans protein is BTB and MATH domain-containing protein 40 (bath-40).